A 1077-amino-acid chain; its full sequence is Adenylate cyclase type 4 (1077 aa).

At 1–28 (MARLFSPRPPPSEDLFYETYYSLSQQYP) the chain is on the cytoplasmic side. 6 consecutive transmembrane segments (helical) span residues 29–50 (LLLL…VAWA), 61–80 (FLTT…GLAS), 94–117 (GLVW…VSAW), 120–138 (VSYF…PLGM), 141–162 (AAVA…YLGP), and 170–190 (LLPQ…AGVY). Over 191–585 (HKALMERALR…YRLSAIPAFK (395 aa)) the chain is Cytoplasmic. The Mg(2+) site is built by D278, I279, and D322. ATP-binding positions include 278 to 283 (DIVGFT), 320 to 322 (LGD), and R366. Phosphoserine is present on S520. Phosphothreonine is present on T536. Helical transmembrane passes span 586–607 (YYEA…LVTN), 611–633 (ALAI…CFSE), and 664–687 (IALG…FFPT). At 688-714 (SSDCPFQAPNVSSMISNLSWELPGSLP) the chain is on the extracellular side. Residues N697 and N704 are each glycosylated (N-linked (GlcNAc...) asparagine). 3 helical membrane passes run 715-736 (LISV…SLFL), 744-764 (LLLL…SHAW), and 791-807 (MGAI…LVLA). Residues 808–1077 (RQNEYYCRLD…RTGPPSATLG (270 aa)) are Cytoplasmic-facing. ATP is bound by residues K925, 1005 to 1007 (DIW), 1012 to 1016 (NVASR), and K1052.

The protein belongs to the adenylyl cyclase class-4/guanylyl cyclase family. The cofactor is Mg(2+). Mn(2+) is required as a cofactor. Detected in the zona glomerulosa and the zona fasciculata in the adrenal gland (at protein level).

It is found in the cell membrane. Its subcellular location is the cytoplasm. The enzyme catalyses ATP = 3',5'-cyclic AMP + diphosphate. Activated by forskolin. Insensitive to calcium/calmodulin. Stimulated by GNAS and by the G-protein beta and gamma subunit complex. Functionally, catalyzes the formation of the signaling molecule cAMP in response to G-protein signaling. The polypeptide is Adenylate cyclase type 4 (ADCY4) (Homo sapiens (Human)).